A 193-amino-acid polypeptide reads, in one-letter code: Xanthine phosphoribosyltransferase (193 aa).

Leu-20 and Asn-27 together coordinate xanthine. 129–133 (ANGKA) serves as a coordination point for 5-phospho-alpha-D-ribose 1-diphosphate. Lys-157 is a binding site for xanthine.

Belongs to the purine/pyrimidine phosphoribosyltransferase family. Xpt subfamily. Homodimer.

Its subcellular location is the cytoplasm. It carries out the reaction XMP + diphosphate = xanthine + 5-phospho-alpha-D-ribose 1-diphosphate. It participates in purine metabolism; XMP biosynthesis via salvage pathway; XMP from xanthine: step 1/1. Its function is as follows. Converts the preformed base xanthine, a product of nucleic acid breakdown, to xanthosine 5'-monophosphate (XMP), so it can be reused for RNA or DNA synthesis. In Bifidobacterium adolescentis (strain ATCC 15703 / DSM 20083 / NCTC 11814 / E194a), this protein is Xanthine phosphoribosyltransferase.